A 373-amino-acid polypeptide reads, in one-letter code: Centrosomal protein of 41 kDa (373 aa).

The disordered stretch occupies residues Leu-91–Ser-137. Phosphoserine occurs at positions 96 and 99. Thr-109 carries the post-translational modification Phosphothreonine. 2 positions are modified to phosphoserine: Ser-114 and Ser-121. Over residues Glu-116–Ser-137 the composition is skewed to polar residues. The Rhodanese domain occupies Pro-169–Val-266. Residues Asp-317–Lys-373 form a disordered region. The span at Ser-325–Gly-334 shows a compositional bias: polar residues. Arg-343 is subject to Omega-N-methylarginine. A compositionally biased stretch (polar residues) spans Asn-347–His-366.

It belongs to the CEP41 family. Found in a complex with TTLL6.

Its subcellular location is the cytoplasm. It is found in the cytoskeleton. The protein resides in the microtubule organizing center. The protein localises to the centrosome. It localises to the cell projection. Its subcellular location is the cilium. It is found in the cilium basal body. Required during ciliogenesis for tubulin glutamylation in cilium. Probably acts by participating in the transport of TTLL6, a tubulin polyglutamylase, between the basal body and the cilium. The chain is Centrosomal protein of 41 kDa (Cep41) from Mus musculus (Mouse).